The chain runs to 185 residues: Ribosome-recycling factor (185 aa).

Belongs to the RRF family.

The protein localises to the cytoplasm. In terms of biological role, responsible for the release of ribosomes from messenger RNA at the termination of protein biosynthesis. May increase the efficiency of translation by recycling ribosomes from one round of translation to another. The sequence is that of Ribosome-recycling factor from Dehalococcoides mccartyi (strain CBDB1).